We begin with the raw amino-acid sequence, 408 residues long: Argininosuccinate synthase (408 aa).

Ala8–Thr16 lines the ATP pocket. Position 86 (Tyr86) interacts with L-citrulline. Gly116 contacts ATP. Residues Thr118, Asn122, and Asp123 each contribute to the L-aspartate site. Position 122 (Asn122) interacts with L-citrulline. L-citrulline-binding residues include Arg126, Ser177, Ser186, Glu263, and Tyr275.

Belongs to the argininosuccinate synthase family. Type 1 subfamily. As to quaternary structure, homotetramer.

It localises to the cytoplasm. The catalysed reaction is L-citrulline + L-aspartate + ATP = 2-(N(omega)-L-arginino)succinate + AMP + diphosphate + H(+). It participates in amino-acid biosynthesis; L-arginine biosynthesis; L-arginine from L-ornithine and carbamoyl phosphate: step 2/3. This Agathobacter rectalis (strain ATCC 33656 / DSM 3377 / JCM 17463 / KCTC 5835 / VPI 0990) (Eubacterium rectale) protein is Argininosuccinate synthase.